A 1816-amino-acid chain; its full sequence is Kinesin-like protein KIF1B (1816 aa).

N-acetylserine is present on serine 2. The region spanning 5–354 (SVKVAVRVRP…LRYADRAKQI (350 aa)) is the Kinesin motor domain. 97-104 (GQTGAGKS) is an ATP binding site. Positions 270–350 (NINKSLTTLG…TLSTLRYADR (81 aa)) are interaction with KIFBP. Coiled-coil stretches lie at residues 365 to 386 (NAKLVRELKEEVTRLKDLLRAQ) and 470 to 502 (GEEAIERLKESEKIIAELNETWEEKLRKTEAIR). An FHA domain is found at 556-612 (TRVGQADAERRQDIVLSGAHIKEEHCLFRSERSNTGEVIVTLEPCERSETYVNGKRV). Residues threonine 647 and threonine 652 each carry the phosphothreonine modification. Coiled-coil stretches lie at residues 668–737 (EKQG…EEEV) and 841–869 (SLDKLKQRLDLMREMYDRAGEVASSAQDD). 5 positions are modified to phosphoserine: serine 1054, serine 1057, serine 1416, serine 1454, and serine 1487. Residues 1522–1571 (VPKSLSDSLSPSLSSGTLSTSTSISSQISTTTFESAITPSESSGYDSADV) form a disordered region. Over residues 1525 to 1553 (SLSDSLSPSLSSGTLSTSTSISSQISTTT) the composition is skewed to low complexity. The span at 1554–1566 (FESAITPSESSGY) shows a compositional bias: polar residues. A phosphoserine mark is found at serine 1573, serine 1603, serine 1610, and serine 1613. A compositionally biased stretch (low complexity) spans 1620 to 1637 (SVSSFSSSTLTPSSTCPS). The segment at 1620–1659 (SVSSFSSSTLTPSSTCPSLVDSRSSSMDQKTPEANSRASS) is disordered. Positions 1640–1659 (DSRSSSMDQKTPEANSRASS) are enriched in polar residues. Positions 1702–1799 (VSKKGYLHFK…WLYAFNPLLA (98 aa)) constitute a PH domain.

This sequence belongs to the TRAFAC class myosin-kinesin ATPase superfamily. Kinesin family. Unc-104 subfamily. In terms of assembly, monomer. Interacts with KIFBP; positively regulates KIF1B microtubule motor activity. Interacts (via C-terminus end of the kinesin-motor domain) with CHP1; the interaction occurs in a calcium-dependent manner. As to quaternary structure, interacts with MADD (via death domain); links this isoform to Rab3-carrying vesicles in anterograde synaptic vesicle transport. Expressed in the brain (at protein level).

It is found in the cytoplasm. The protein resides in the cytoskeleton. Its subcellular location is the cytoplasmic vesicle. It localises to the secretory vesicle. The protein localises to the synaptic vesicle membrane. It is found in the mitochondrion. The catalysed reaction is ATP + H2O + a kinesin associated with a microtubule at position (n) = ADP + phosphate a kinesin associated with a microtubule at position (n+1, toward the plus end).. Has a plus-end-directed microtubule motor activity and functions as a motor for transport of vesicles and organelles along microtubules. Functionally, has a plus-end-directed microtubule motor activity and functions as a motor for anterograde synaptic vesicle transport along axonal microtubules from the cell body to the presynapse in neuronal cells. Functions as a downstream effector in a developmental apoptotic pathway that is activated when nerve growth factor (NGF) becomes limiting for neuronal progenitor cells. Its function is as follows. Has a plus-end-directed microtubule motor activity and functions as a motor for anterograde transport of mitochondria. This chain is Kinesin-like protein KIF1B, found in Mus musculus (Mouse).